The sequence spans 498 residues: Sugar transport protein 2 (498 aa).

The Cytoplasmic segment spans residues 1-22 (MAVGSMNVEEGTKAFPAKLTGQ). 12 consecutive transmembrane segments (helical) span residues 23–43 (VFLC…DIGI), 80–100 (LLQL…FISS), 117–137 (IFFL…MLIG), 140–160 (ILLG…ISEI), 167–187 (GGLN…ASYV), 200–220 (YSLG…FFIH), 288–308 (LQFF…PVLF), 320–340 (ISTV…LLVV), 348–368 (LLME…GILL), 381–401 (AVPL…AWSW), 421–441 (GYFC…QFFL), and 450–470 (LLFF…VFFL). Residues 471–498 (PETKGVPIEEMAEKRWKTHPRWKKYFKD) are Cytoplasmic-facing.

It belongs to the major facilitator superfamily. Sugar transporter (TC 2.A.1.1) family. In terms of tissue distribution, pollen specific (at protein level).

The protein resides in the membrane. In terms of biological role, mediates an active uptake of hexoses, probably by sugar/hydrogen symport. Can transport glucose, 3-O-methylglucose, xylose, mannose, fructose and galactose. The protein is Sugar transport protein 2 (STP2) of Arabidopsis thaliana (Mouse-ear cress).